The sequence spans 248 residues: Segregation and condensation protein A (248 aa).

Belongs to the ScpA family. Component of a cohesin-like complex composed of ScpA, ScpB and the Smc homodimer, in which ScpA and ScpB bind to the head domain of Smc. The presence of the three proteins is required for the association of the complex with DNA.

Its subcellular location is the cytoplasm. In terms of biological role, participates in chromosomal partition during cell division. May act via the formation of a condensin-like complex containing Smc and ScpB that pull DNA away from mid-cell into both cell halves. The chain is Segregation and condensation protein A from Clostridium perfringens (strain SM101 / Type A).